Consider the following 38-residue polypeptide: MTTSLANFIASLTAGALVLSAIGIALIIISKNDRVQRS.

Residues 9–29 (IASLTAGALVLSAIGIALIII) form a helical membrane-spanning segment.

Belongs to the PsbX family. Type 1 subfamily. As to quaternary structure, PSII is composed of 1 copy each of membrane proteins PsbA, PsbB, PsbC, PsbD, PsbE, PsbF, PsbH, PsbI, PsbJ, PsbK, PsbL, PsbM, PsbT, PsbX, PsbY, PsbZ, Psb30/Ycf12, at least 3 peripheral proteins of the oxygen-evolving complex and a large number of cofactors. It forms dimeric complexes.

Its subcellular location is the plastid. The protein resides in the chloroplast thylakoid membrane. Functionally, involved in the binding and/or turnover of quinones at the Q(B) site of photosystem II (PSII). PSII is a light-driven water plastoquinone oxidoreductase, using light energy to abstract electrons from H(2)O, generating a proton gradient subsequently used for ATP formation. The protein is Photosystem II reaction center protein X of Thalassiosira pseudonana (Marine diatom).